The sequence spans 937 residues: Isoleucine--tRNA ligase (937 aa).

A 'HIGH' region motif is present at residues 58–68 (PYANGHIHLGT). Residue Glu566 participates in L-isoleucyl-5'-AMP binding. The 'KMSKS' region motif lies at 607-611 (KMSKS). Residue Lys610 participates in ATP binding. Cys906, Cys909, Cys925, and Cys928 together coordinate Zn(2+).

Belongs to the class-I aminoacyl-tRNA synthetase family. IleS type 1 subfamily. As to quaternary structure, monomer. Zn(2+) is required as a cofactor.

It localises to the cytoplasm. It carries out the reaction tRNA(Ile) + L-isoleucine + ATP = L-isoleucyl-tRNA(Ile) + AMP + diphosphate. Its function is as follows. Catalyzes the attachment of isoleucine to tRNA(Ile). As IleRS can inadvertently accommodate and process structurally similar amino acids such as valine, to avoid such errors it has two additional distinct tRNA(Ile)-dependent editing activities. One activity is designated as 'pretransfer' editing and involves the hydrolysis of activated Val-AMP. The other activity is designated 'posttransfer' editing and involves deacylation of mischarged Val-tRNA(Ile). The chain is Isoleucine--tRNA ligase from Lawsonia intracellularis (strain PHE/MN1-00).